The following is a 135-amino-acid chain: Photosystem II extrinsic protein U (135 aa).

Residues 1 to 26 (MKNLVRLLAVIALIIGSFWGKVPAQA) form the signal peptide.

Belongs to the PsbU family. In terms of assembly, PSII is composed of 1 copy each of membrane proteins PsbA, PsbB, PsbC, PsbD, PsbE, PsbF, PsbH, PsbI, PsbJ, PsbK, PsbL, PsbM, PsbT, PsbX, PsbY, PsbZ, Psb30/Ycf12, peripheral proteins PsbO, CyanoQ (PsbQ), PsbU, PsbV and a large number of cofactors. It forms dimeric complexes.

The protein resides in the cellular thylakoid membrane. Functionally, one of the extrinsic, lumenal subunits of photosystem II (PSII). PSII is a light-driven water plastoquinone oxidoreductase, using light energy to abstract electrons from H(2)O, generating a proton gradient subsequently used for ATP formation. The extrinsic proteins stabilize the structure of photosystem II oxygen-evolving complex (OEC), the ion environment of oxygen evolution and protect the OEC against heat-induced inactivation. In Microcystis aeruginosa (strain NIES-843 / IAM M-2473), this protein is Photosystem II extrinsic protein U.